The primary structure comprises 429 residues: Ribosomal RNA small subunit methyltransferase B (429 aa).

S-adenosyl-L-methionine-binding positions include 254–260 (CAAPGGK), aspartate 277, aspartate 303, and aspartate 322. The active-site Nucleophile is the cysteine 375.

This sequence belongs to the class I-like SAM-binding methyltransferase superfamily. RsmB/NOP family.

The protein resides in the cytoplasm. It carries out the reaction cytidine(967) in 16S rRNA + S-adenosyl-L-methionine = 5-methylcytidine(967) in 16S rRNA + S-adenosyl-L-homocysteine + H(+). Its function is as follows. Specifically methylates the cytosine at position 967 (m5C967) of 16S rRNA. This Pectobacterium carotovorum subsp. carotovorum (strain PC1) protein is Ribosomal RNA small subunit methyltransferase B.